A 778-amino-acid chain; its full sequence is Transcription factor kayak (778 aa).

2 stretches are compositionally biased toward low complexity: residues 24–54 and 77–98; these read AQQL…HTQQ and QYYQ…QRQL. Disordered regions lie at residues 24 to 57, 76 to 130, 183 to 223, 294 to 320, 356 to 414, and 427 to 478; these read AQQL…QNGL, NQYY…HQLR, QPTA…TTNG, APLV…VLAS, ASVM…GTGG, and RNTN…RKRR. Residues 99–108 are compositionally biased toward polar residues; the sequence is PTQQPAASYE. Composition is skewed to low complexity over residues 109 to 130 and 183 to 222; these read QQQQ…HQLR and QPTA…TTTN. Positions 382–402 are enriched in low complexity; the sequence is ISDTSSGATDSTSYQNGHMMG. Over residues 403-414 the composition is skewed to gly residues; it reads NSGGGNGGGTGG. Residues 427-436 show a composition bias toward polar residues; sequence RNTNTSNSAT. The bZIP domain occupies 457 to 520; the sequence is EEKRRIRRER…NQLEYFLQAH (64 aa). The tract at residues 459-478 is basic motif; the sequence is KRRIRRERNKQAAARCRKRR. The interval 485-513 is leucine-zipper; it reads LTEEVELLEKRGENLKKEMELLNETKNQL. Positions 550-571 are enriched in low complexity; that stretch reads GSCGSGSSHHNNNSNSNDSSSG. 2 disordered regions span residues 550–594 and 756–778; these read GSCG…DLKP and TSQN…LVSL. Residues 579–589 are compositionally biased toward polar residues; the sequence is TLNSTGRSNSP. At S588 the chain carries Phosphoserine.

It belongs to the bZIP family. Fos subfamily. As to quaternary structure, homodimer. Heterodimer with Jra. The kay-Jra heterodimer binds more stably to the AP-1 site than either of the two proteins alone.

The protein localises to the nucleus. Developmentally regulated transcription factor AP-1 binds and recognizes the enhancer DNA sequence: 5'-TGA[CG]TCA-3'. May play a role in the function or determination of a particular subset of cells in the developing embryo. It is able to carry out its function either independently of or in conjunction with Jra. The protein is Transcription factor kayak of Drosophila pseudoobscura pseudoobscura (Fruit fly).